The chain runs to 209 residues: Ribosomal RNA large subunit methyltransferase E (209 aa).

S-adenosyl-L-methionine is bound by residues Gly-63, Trp-65, Asp-83, Asp-99, and Asp-124. Lys-164 serves as the catalytic Proton acceptor.

It belongs to the class I-like SAM-binding methyltransferase superfamily. RNA methyltransferase RlmE family.

It localises to the cytoplasm. It catalyses the reaction uridine(2552) in 23S rRNA + S-adenosyl-L-methionine = 2'-O-methyluridine(2552) in 23S rRNA + S-adenosyl-L-homocysteine + H(+). In terms of biological role, specifically methylates the uridine in position 2552 of 23S rRNA at the 2'-O position of the ribose in the fully assembled 50S ribosomal subunit. The sequence is that of Ribosomal RNA large subunit methyltransferase E from Vibrio campbellii (strain ATCC BAA-1116).